Consider the following 170-residue polypeptide: Cathelicidin antimicrobial peptide (170 aa).

Positions 1–30 (MKTQRDGHSLGGWSLMLLLLGLLMPLAIVA) are cleaved as a signal peptide. Positions 31–131 (QVLSYKEAVL…DISCDKDNRR (101 aa)) are cleaved as a propeptide — cathelin-like domain (CLD). Disulfide bonds link Cys86–Cys97 and Cys108–Cys125. The segment at 150–162 (FKRIVQRIKDFLQ) is active core.

Belongs to the cathelicidin family. In terms of assembly, monomer, homodimer or homotrimer (in vitro). Oligomerizes as tetra- or hexamer in solution (in vitro). Proteolytically cleaved by proteinase PRTN3 into antibacterial peptide LL-37. Proteolytically cleaved by cathepsin CTSG and neutrophil elastase ELANE. In terms of processing, resistant to proteolytic degradation in solution, and when bound to both zwitterionic (mimicking mammalian membranes) and negatively charged membranes (mimicking bacterial membranes). Post-translationally, after secretion onto the skin surface, the CAMP gene product is processed by a serine protease-dependent mechanism into multiple novel antimicrobial peptides distinct from and shorter than cathelicidin LL-37. These peptides show enhanced antimicrobial action, acquiring the ability to kill skin pathogens such as S.aureus, E.coli and C.albicans. These peptides have lost the ability to stimulate CXCL8/IL8 release from keratinocytes. The peptides act synergistically, killing bacteria at lower concentrations when present together, and maintain activity at increased salt condition.

It localises to the secreted. It is found in the vesicle. Antimicrobial protein that is an integral component of the innate immune system. Binds to bacterial lipopolysaccharides (LPS). Acts via neutrophil N-formyl peptide receptors to enhance the release of CXCL2. Postsecretory processing generates multiple cathelicidin antimicrobial peptides with various lengths which act as a topical antimicrobial defense in sweat on skin. The unprocessed precursor form, cathelicidin antimicrobial peptide, inhibits the growth of Gram-negative E.coli and E.aerogenes with efficiencies comparable to that of the mature peptide LL-37 (in vitro). Its function is as follows. Antimicrobial peptide that is an integral component of the innate immune system. Binds to bacterial lipopolysaccharides (LPS). Causes membrane permeabilization by forming transmembrane pores (in vitro). Causes lysis of E.coli. Exhibits antimicrobial activity against Gram-negative bacteria such as P.aeruginosa, S.typhimurium, E.aerogenes, E.coli and P.syringae, Gram-positive bacteria such as L.monocytogenes, S.epidermidis, S.pyogenes and S.aureus, as well as vancomycin-resistant enterococci (in vitro). Exhibits antimicrobial activity against methicillin-resistant S.aureus, P.mirabilis, and C.albicans in low-salt media, but not in media containing 100 mM NaCl (in vitro). Forms chiral supramolecular assemblies with quinolone signal (PQS) molecules of P.aeruginosa, which may lead to interference of bacterial quorum signaling and perturbance of bacterial biofilm formation. May form supramolecular fiber-like assemblies on bacterial membranes. Induces cytokine and chemokine producation as well as TNF/TNFA and CSF2/GMCSF production in normal human keratinocytes. Exhibits hemolytic activity against red blood cells. Functionally, exhibits antimicrobial activity against E.coli and B.megaterium (in vitro). This chain is Cathelicidin antimicrobial peptide, found in Hylobates moloch (Silvery gibbon).